Reading from the N-terminus, the 695-residue chain is Protein MALE DISCOVERER 1 (695 aa).

Positions 1–29 are cleaved as a signal peptide; the sequence is MGCRWNPIGFQFSCFMFLIITLQSRSSLS. The Extracellular segment spans residues 30 to 340; that stretch reads LESEGFVLLK…SKGFKDVWLY (311 aa). Residues N56 and N80 are each glycosylated (N-linked (GlcNAc...) asparagine). LRR repeat units follow at residues 75 to 98, 99 to 121, 123 to 144, and 147 to 168; these read KVQM…SQLS, ELRS…FASF, KLEF…ELNK, and TPEN…KFLR. The N-linked (GlcNAc...) asparagine glycan is linked to N247. The disordered stretch occupies residues 302–325; that stretch reads PPLIPPSSPPPLPTNNTIASDPPR. Residues 303–314 are compositionally biased toward pro residues; the sequence is PLIPPSSPPPLP. A glycan (N-linked (GlcNAc...) asparagine) is linked at N316. Residues 341–361 traverse the membrane as a helical segment; it reads VVIGVAAFVAMLIIVAVIFFF. Topologically, residues 362-695 are cytoplasmic; sequence RKRAVKSIGP…ELEILSSEAT (334 aa). Residues 363–668 enclose the Protein kinase domain; that stretch reads KRAVKSIGPW…YVVQQLKEVI (306 aa). S652 is modified (phosphoserine).

The protein belongs to the protein kinase superfamily. Ser/Thr protein kinase family. Homodimer. Interacts with MIK1, MIK2 and LURE1.2. LURE1.2 enhances the heterodimerization of MDIS1 with MIK1 or MIK2. Phosphorylated by MIK1. As to expression, expressed in pollen tubes and seedlings.

The protein resides in the cell membrane. The protein localises to the endomembrane system. The enzyme catalyses L-seryl-[protein] + ATP = O-phospho-L-seryl-[protein] + ADP + H(+). It carries out the reaction L-threonyl-[protein] + ATP = O-phospho-L-threonyl-[protein] + ADP + H(+). Its function is as follows. Involved in the pollen tube perception of the female signal. The sequence is that of Protein MALE DISCOVERER 1 from Arabidopsis thaliana (Mouse-ear cress).